The chain runs to 474 residues: Mitogen-activated protein kinase pmk-3 (474 aa).

Positions 1–13 (MASVPSSSSLPVS) are enriched in low complexity. The segment at 1-90 (MASVPSSSSL…EEEEDILSKP (90 aa)) is disordered. Over residues 30-48 (KRSNNQSQPPESYEPNTWL) the composition is skewed to polar residues. Residues 52 to 69 (REQEQQKKLAAENIKKQS) show a composition bias toward basic and acidic residues. The Protein kinase domain maps to 114-419 (YDVEPNSIEY…VEEAIQHPYL (306 aa)). ATP is bound by residues 124–132 (LGGGSFGNV) and Lys-150. Asp-252 serves as the catalytic Proton acceptor. Residue Thr-285 is modified to Phosphothreonine. Positions 285 to 287 (TQY) match the TXY motif. Residue Tyr-287 is modified to Phosphotyrosine.

Belongs to the protein kinase superfamily. CMGC Ser/Thr protein kinase family. MAP kinase subfamily. Interacts with mak-2. May interact with vhp-1. May interact with uev-3. The cofactor is Mg(2+). Post-translationally, dually phosphorylated on Thr-285 and Tyr-287, which activates the enzyme. In terms of tissue distribution, expressed throughout the intestine.

Its subcellular location is the nucleus. It localises to the cytoplasm. The protein localises to the cell projection. The protein resides in the axon. It is found in the dendrite. Its subcellular location is the cilium. The enzyme catalyses L-seryl-[protein] + ATP = O-phospho-L-seryl-[protein] + ADP + H(+). It carries out the reaction L-threonyl-[protein] + ATP = O-phospho-L-threonyl-[protein] + ADP + H(+). With respect to regulation, activated by phosphorylation on threonine and tyrosine. Its function is as follows. Responds to activation by environmental stress and pro-inflammatory cytokines by phosphorylating downstream targets. Involved in axon regeneration after injury, probably downstream of dlk-1 and mkk-4 and upstream of mak-2. May phosphorylate mak-2. Plays a role in cilium length regulation, possibly by reducing rab-5 mediated endocytosis. Plays a role in the formation of muscle connections, also called muscle arm extensions, between the body wall and the motor axons in the dorsal and ventral cord. In Caenorhabditis elegans, this protein is Mitogen-activated protein kinase pmk-3 (pmk-3).